An 899-amino-acid chain; its full sequence is Probable dipeptidyl-aminopeptidase B (899 aa).

The tract at residues 1-69 (MKLDRMRVGS…NHNGRTQGNY (69 aa)) is disordered. The Cytoplasmic segment spans residues 1–99 (MKLDRMRVGS…NGKSSQRRTL (99 aa)). Residues 32–43 (DSSSTASISLTL) show a composition bias toward low complexity. The chain crosses the membrane as a helical; Signal-anchor for type II membrane protein span at residues 100-120 (IVFWLLVALCVGGWAVAFLFF). Residues 121 to 899 (VTSPGNKTST…KYFNLSFLGH (779 aa)) are Vacuolar-facing. Positions 128 to 139 (TSTSPHSGSNSP) are enriched in polar residues. Residues 128 to 149 (TSTSPHSGSNSPEGDVTKPGIP) form a disordered region. Residues Asn-212, Asn-308, and Asn-360 are each glycosylated (N-linked (GlcNAc...) asparagine). The Charge relay system role is filled by Ser-765. Asn-819, Asn-824, and Asn-827 each carry an N-linked (GlcNAc...) asparagine glycan. Residues Asp-842 and His-875 each act as charge relay system in the active site. Asn-893 is a glycosylation site (N-linked (GlcNAc...) asparagine).

Belongs to the peptidase S9B family.

It localises to the vacuole membrane. The enzyme catalyses Release of an N-terminal dipeptide, Xaa-Yaa-|-Zaa-, from a polypeptide, preferentially when Yaa is Pro, provided Zaa is neither Pro nor hydroxyproline.. Functionally, type IV dipeptidyl-peptidase which removes N-terminal dipeptides sequentially from polypeptides having unsubstituted N-termini provided that the penultimate residue is proline. The polypeptide is Probable dipeptidyl-aminopeptidase B (DAPB) (Trichophyton verrucosum (strain HKI 0517)).